The chain runs to 904 residues: Dynamin-like protein C (904 aa).

Positions 44–102 form a coiled coil; it reads IAEAMALKMHEEEKKKREEKKRKRDNEELLSKQVRTKLENERKKLDDSESINASTNQEL. The tract at residues 53-93 is disordered; that stretch reads HEEEKKKREEKKRKRDNEELLSKQVRTKLENERKKLDDSES. The span at 67-90 shows a compositional bias: basic and acidic residues; the sequence is RDNEELLSKQVRTKLENERKKLDD. The 323-residue stretch at 119–441 folds into the Dynamin-type G domain; the sequence is SFDTPELVVV…HEKYQQNLLP (323 aa). Residues 129–136 form a G1 motif region; it reads GMQSDGKS. 129–136 is a binding site for GTP; it reads GMQSDGKS. The tract at residues 155–157 is G2 motif; the sequence is GTR. Residues 169 to 227 form a disordered region; that stretch reads SKQQPSCRFKKEDYSNSYGGSSSSTSTTSGNSNHNTDKQQNVSSSQGGGGGSNNLNEDK. Residues 183–213 show a composition bias toward low complexity; the sequence is SNSYGGSSSSTSTTSGNSNHNTDKQQNVSSS. Residues 278 to 281 are G3 motif; the sequence is DTPG. GTP is bound by residues 278-282 and 343-346; these read DTPGF and TKFD. The G4 motif stretch occupies residues 343-346; the sequence is TKFD. Residues 378-381 form a G5 motif region; that stretch reads LPLK. Residues 781-811 are a coiled coil; that stretch reads EMFQLGLKELENKLHKLEFQLIDCKKNRDKF. 2 disordered regions span residues 821 to 840 and 853 to 904; these read SLNQ…ASSS and NGKF…FDQN. Over residues 853-876 the composition is skewed to polar residues; the sequence is NGKFSTPDKNSLTMSPFTSPFTQS. Residues 877–891 show a composition bias toward low complexity; the sequence is NYHQHNNNNYQINQQ.

Belongs to the TRAFAC class dynamin-like GTPase superfamily. Dynamin/Fzo/YdjA family.

It is found in the cytoplasm. The catalysed reaction is GTP + H2O = GDP + phosphate + H(+). In terms of biological role, involved in cytokinesis. May hydrolyze GTP. In Dictyostelium discoideum (Social amoeba), this protein is Dynamin-like protein C (dlpC).